Reading from the N-terminus, the 84-residue chain is ATP synthase subunit c (84 aa).

2 consecutive transmembrane segments (helical) span residues 1 to 21 (MLAW…ALVG) and 53 to 73 (LLFA…VALI).

This sequence belongs to the ATPase C chain family. In terms of assembly, F-type ATPases have 2 components, F(1) - the catalytic core - and F(0) - the membrane proton channel. F(1) has five subunits: alpha(3), beta(3), gamma(1), delta(1), epsilon(1). F(0) has three main subunits: a(1), b(2) and c(10-14). The alpha and beta chains form an alternating ring which encloses part of the gamma chain. F(1) is attached to F(0) by a central stalk formed by the gamma and epsilon chains, while a peripheral stalk is formed by the delta and b chains.

The protein localises to the cell inner membrane. In terms of biological role, f(1)F(0) ATP synthase produces ATP from ADP in the presence of a proton or sodium gradient. F-type ATPases consist of two structural domains, F(1) containing the extramembraneous catalytic core and F(0) containing the membrane proton channel, linked together by a central stalk and a peripheral stalk. During catalysis, ATP synthesis in the catalytic domain of F(1) is coupled via a rotary mechanism of the central stalk subunits to proton translocation. Functionally, key component of the F(0) channel; it plays a direct role in translocation across the membrane. A homomeric c-ring of between 10-14 subunits forms the central stalk rotor element with the F(1) delta and epsilon subunits. The chain is ATP synthase subunit c from Dictyoglomus thermophilum (strain ATCC 35947 / DSM 3960 / H-6-12).